The primary structure comprises 422 residues: Proline-rich protein 22 (422 aa).

Disordered regions lie at residues 1-35 (MQHPKPFCAPAAPQEGFSPQSLEGAEVLGNQPAPT), 306-325 (LCEVPGPALPDSSGGNSADD), and 363-422 (EEQP…ATPH). A compositionally biased stretch (basic residues) spans 383–400 (GKRKASTAKKGKPGRKAR). A compositionally biased stretch (basic and acidic residues) spans 413 to 422 (PREDLGATPH).

The chain is Proline-rich protein 22 (PRR22) from Homo sapiens (Human).